The following is a 168-amino-acid chain: Transcription antitermination protein NusB (168 aa).

The protein belongs to the NusB family.

In terms of biological role, involved in transcription antitermination. Required for transcription of ribosomal RNA (rRNA) genes. Binds specifically to the boxA antiterminator sequence of the ribosomal RNA (rrn) operons. This chain is Transcription antitermination protein NusB, found in Bradyrhizobium sp. (strain ORS 278).